Here is a 141-residue protein sequence, read N- to C-terminus: uncharacterized protein (141 aa).

This is an uncharacterized protein from Saccharomyces cerevisiae (strain ATCC 204508 / S288c) (Baker's yeast).